A 343-amino-acid chain; its full sequence is Ribosomal RNA small subunit methyltransferase C (343 aa).

This sequence belongs to the methyltransferase superfamily. RsmC family. In terms of assembly, monomer.

The protein resides in the cytoplasm. The enzyme catalyses guanosine(1207) in 16S rRNA + S-adenosyl-L-methionine = N(2)-methylguanosine(1207) in 16S rRNA + S-adenosyl-L-homocysteine + H(+). In terms of biological role, specifically methylates the guanine in position 1207 of 16S rRNA in the 30S particle. In Escherichia coli O17:K52:H18 (strain UMN026 / ExPEC), this protein is Ribosomal RNA small subunit methyltransferase C.